The following is a 1197-amino-acid chain: Envelopment polyprotein (1197 aa).

An N-terminal signal peptide occupies residues 1–16 (MYVLLTILTSVLVCEA). The Cytoplasmic segment spans residues 17–130 (IIRVSLSSTR…RDAKQIGRKT (114 aa)). An internal signal sequence for glycoprotein N region spans residues 131 to 153 (MAGIAMTVLPALAVFALAPVVFA). Topologically, residues 154 to 582 (EDPHLRNRPG…GLINYQCHTA (429 aa)) are lumenal. Disulfide bonds link Cys-179–Cys-188, Cys-229–Cys-239, Cys-250–Cys-281, Cys-271–Cys-284, Cys-304–Cys-456, Cys-322–Cys-332, Cys-374–Cys-434, Cys-402–Cys-413, Cys-420–Cys-425, Cys-479–Cys-482, Cys-486–Cys-556, and Cys-506–Cys-511. A helical membrane pass occupies residues 583–603 (LSAFVVVFVFSSIAIICLAIL). At 604–673 (YRVLKCLKIA…APIPRHAPIP (70 aa)) the chain is on the cytoplasmic side. The interval 608-650 (KCLKIAPRKVLNPLMWITAFIRWIYKKMVARVADNINQVNREI) is golgi retention signal. The important for correct targeting of the glycoproteins to the Golgi complex but not for heterodimerization stretch occupies residues 646–650 (VNREI). The internal signal sequence for glycoprotein C stretch occupies residues 675–690 (YSTYLMLLLIVSYASA). 12 disulfides stabilise this stretch: Cys-691–Cys-731, Cys-704–Cys-713, Cys-756–Cys-852, Cys-771–Cys-965, Cys-777–Cys-825, Cys-783–Cys-832, Cys-788–Cys-814, Cys-818–Cys-823, Cys-934–Cys-947, Cys-1029–Cys-1101, Cys-1039–Cys-1042, and Cys-1049–Cys-1083. The Lumenal segment spans residues 691–1159 (CSELIQASSR…MSWFGGPLKT (469 aa)). Residues 777–783 (CHLVGEC) are fusion loop. A glycan (N-linked (GlcNAc...) asparagine; by host) is linked at Asn-794. The segment at 819–830 (GGWGCGCFNVNP) is fusion loop. Asn-1035 carries N-linked (GlcNAc...) asparagine; by host glycosylation. Asn-1077 carries an N-linked (GlcNAc...) asparagine; by host glycan. Residues 1160–1180 (ILLICLYVALSIGLFFLLIYL) traverse the membrane as a helical segment. The Cytoplasmic segment spans residues 1181–1197 (GGTGLSKMWLAATKKAS).

Belongs to the phlebovirus envelope glycoprotein family. As to quaternary structure, heterodimer with glycoprotein C. Homotrimer (postfusion). Interacts with nucleocapsid protein N and with the polymerase L in order to package them into virus particles. Interacts with host E3 ubiquitin-protein ligase UBR4; this interaction is important for viral RNA production. Interacts with host LRP1; this interaction facilitates virus entry into the host cell. In terms of assembly, heterodimer with glycoprotein C. Post-translationally, specific enzymatic cleavages in vivo yield mature proteins including NSm protein, Glycoprotein C, and Glycoprotein N. In terms of processing, glycosylated. The glycans can attach to host CD209/DC-SIGN, and may play a role in virus entry into dendritic cells. Palmitoylated.

Its subcellular location is the virion membrane. It is found in the host Golgi apparatus membrane. The protein localises to the host endoplasmic reticulum membrane. It localises to the host mitochondrion outer membrane. The protein resides in the host Golgi apparatus. Its subcellular location is the virion. Functionally, structural component of the virion that interacts with glycoprotein C. It shields the hydrophobic fusion loops of the glycoprotein C, preventing premature fusion. The glycoprotein protrusions are arranged on an icosahedral lattice, with T=12 triangulation. They are able to attach the virion to the host cell receptor CD209/DC-SIGN and to promote fusion of membranes with the late endosome after endocytosis of the virion. Plays a role in the packaging of ribonucleoproteins and polymerase during virus assembly. In terms of biological role, structural component of the virion that interacts with glycoprotein N. Acts as a class II fusion protein that is activated upon acidification and subsequent repositioning of the glycoprotein N. The glycoprotein protrusions are arranged on an icosahedral lattice, with T=12 triangulation. They are able to attach the virion to the host cell receptor CD209/DC-SIGN and to promote fusion of membranes with the late endosome after endocytosis of the virion. Its function is as follows. Plays a role in the inhibition of virus-induced apoptosis. Plays a role for virus dissemination in vertebrates. Plays a role for virus dissemination in mosquitoes. May act as a structural virion protein in insects. This is Envelopment polyprotein (GP) from Rift valley fever virus (strain ZH-548 M12) (RVFV).